Reading from the N-terminus, the 658-residue chain is MERSNLFHIPCFLLLFLLFNINGVHTTFVCGDEDFSPNTSYVENLESLLPSLASNVIRERGFYNVSLDGVYALALCRKHYEVQACRRCVDRASRTLLTQCRGKTEAYHWDSENDANVSCLVRYSNIHRFGKLKLEPIGNVPHSSLDPSSNLTRISQEFAARANRTVEVASTADESSVLKYYGVSSAEFTDTPEVNMLMQCTPDLSSSDCNHCLRENVRYNQEHNWDRVGGTVARPSCYFRWDDYRFAGAFDNLERVPAPPRSPQTRQDYRVKKGRMFQPWSVVVVVFPTGINLAVFVAFVLAYRRMRRRIYTEINKNSDSDGQATLRFDLGMILIATNEFSLENKLGQGGFGSVYKGILPSGQEIAVKRLAGGSGQGELEFKNEVLLLTRLQHRNLVKLLGFCNEGNEEILVYEHVPNSSLDHFIFDEDKRWLLTWDVRYRIIEGVARGLLYLHEDSQLRIIHRDLKASNILLDAEMNPKVADFGMARLFNMDETRGETSRVVGTYGYMAPEYVRHGQFSAKSDVYSFGVMLLEMISGEKNKNFETEGLPAFAWKRWIEGELESIIDPYLNENPRNEIIKLIQIGLLCVQENAAKRPTMNSVITWLARDGTFTIPKPTEAAFVTLPLSVKPENRSMSERKDKDPFSVDEVSITVLYPR.

A signal peptide spans 1–26; sequence MERSNLFHIPCFLLLFLLFNINGVHT. Gnk2-homologous domains are found at residues 27-128 and 139-246; these read TFVC…NIHR and NVPH…DYRF. Over 27-281 the chain is Extracellular; sequence TFVCGDEDFS…KKGRMFQPWS (255 aa). N-linked (GlcNAc...) asparagine glycans are attached at residues Asn-38, Asn-64, Asn-116, Asn-150, and Asn-163. Residues 282 to 302 form a helical membrane-spanning segment; sequence VVVVVFPTGINLAVFVAFVLA. Residues 303 to 658 are Cytoplasmic-facing; it reads YRRMRRRIYT…EVSITVLYPR (356 aa). One can recognise a Protein kinase domain in the interval 340-612; it reads FSLENKLGQG…ITWLARDGTF (273 aa). ATP-binding positions include 346-354 and Lys-368; that span reads LGQGGFGSV. Tyr-413 is modified (phosphotyrosine). Asp-465 (proton acceptor) is an active-site residue. A Phosphoserine modification is found at Ser-469. The residue at position 505 (Thr-505) is a Phosphothreonine. A Phosphotyrosine modification is found at Tyr-513.

The protein belongs to the protein kinase superfamily. Ser/Thr protein kinase family. CRK subfamily. In terms of assembly, interacts with CRK45. In terms of processing, autophosphorylated.

Its subcellular location is the cell membrane. The catalysed reaction is L-seryl-[protein] + ATP = O-phospho-L-seryl-[protein] + ADP + H(+). The enzyme catalyses L-threonyl-[protein] + ATP = O-phospho-L-threonyl-[protein] + ADP + H(+). Functionally, forms a complex with CRK45 that may negatively control abscisic acid (ABA) and osmotic stress signal transduction. Can phosphorylate CRK45 in vitro. In Arabidopsis thaliana (Mouse-ear cress), this protein is Cysteine-rich receptor-like protein kinase 36.